Consider the following 343-residue polypeptide: Replication initiation protein (343 aa).

A disordered region spans residues Glu-42–Asn-61.

In terms of biological role, probably functions as an initiator for the IncI1 ColIb-P9 replicon. The protein is Replication initiation protein (repZ) of Escherichia coli.